We begin with the raw amino-acid sequence, 364 residues long: Aminomethyltransferase (364 aa).

It belongs to the GcvT family. As to quaternary structure, the glycine cleavage system is composed of four proteins: P, T, L and H.

The enzyme catalyses N(6)-[(R)-S(8)-aminomethyldihydrolipoyl]-L-lysyl-[protein] + (6S)-5,6,7,8-tetrahydrofolate = N(6)-[(R)-dihydrolipoyl]-L-lysyl-[protein] + (6R)-5,10-methylene-5,6,7,8-tetrahydrofolate + NH4(+). Functionally, the glycine cleavage system catalyzes the degradation of glycine. This Shewanella sp. (strain MR-4) protein is Aminomethyltransferase.